Consider the following 173-residue polypeptide: Alpha-crystallin A chain (173 aa).

An N-acetylmethionine modification is found at M1. Positions 1 to 63 (MDIAIQHPWF…RTVLDSGISE (63 aa)) are required for complex formation with BFSP1 and BFSP2. Position 6 is a deamidated glutamine; partial (Q6). A Phosphoserine modification is found at S45. Q50 carries the deamidated glutamine; partial modification. The sHSP domain maps to 52–162 (LFRTVLDSGI…GHSERAIPVS (111 aa)). K70 and K99 each carry N6-acetyllysine. Position 100 (H100) interacts with Zn(2+). N101 carries the post-translational modification Deamidated asparagine; partial. Positions 102 and 107 each coordinate Zn(2+). S122 is modified (phosphoserine). N123 carries the deamidated asparagine; partial modification. The tract at residues 144 to 173 (PKVPSGMDAGHSERAIPVSREEKPSSAPSS) is disordered. Over residues 153 to 167 (GHSERAIPVSREEKP) the composition is skewed to basic and acidic residues. H154 lines the Zn(2+) pocket. An O-linked (GlcNAc) serine glycan is attached at S162.

The protein belongs to the small heat shock protein (HSP20) family. In terms of assembly, heteromer composed of three CRYAA and one CRYAB subunits. Inter-subunit bridging via zinc ions enhances stability, which is crucial as there is no protein turn over in the lens. Can also form homodimers and homotetramers (dimers of dimers) which serve as the building blocks of homooligomers. Within homooligomers, the zinc-binding motif is created from residues of 3 different molecules. His-100 and Glu-102 from one molecule are ligands of the zinc ion, and His-107 and His-154 residues from additional molecules complete the site with tetrahedral coordination geometry. Part of a complex required for lens intermediate filament formation composed of BFSP1, BFSP2 and CRYAA. Acetylation at Lys-70 may increase chaperone activity. In terms of processing, undergoes age-dependent proteolytical cleavage at the C-terminus.

The protein localises to the cytoplasm. It localises to the nucleus. Its function is as follows. Contributes to the transparency and refractive index of the lens. Acts as a chaperone, preventing aggregation of various proteins under a wide range of stress conditions. Required for the correct formation of lens intermediate filaments as part of a complex composed of BFSP1, BFSP2 and CRYAA. This chain is Alpha-crystallin A chain (CRYAA), found in Melursus ursinus (Sloth bear).